Here is a 159-residue protein sequence, read N- to C-terminus: 2-C-methyl-D-erythritol 2,4-cyclodiphosphate synthase (159 aa).

A divalent metal cation contacts are provided by Asp10 and His12. 4-CDP-2-C-methyl-D-erythritol 2-phosphate-binding positions include 10 to 12 (DVH) and 36 to 37 (HS). His44 serves as a coordination point for a divalent metal cation. 4-CDP-2-C-methyl-D-erythritol 2-phosphate is bound by residues 58 to 60 (DIG), 63 to 67 (FPDTD), 102 to 108 (AQAPKMA), 134 to 137 (TTTE), Phe141, and Arg144.

Belongs to the IspF family. In terms of assembly, homotrimer. A divalent metal cation is required as a cofactor.

It carries out the reaction 4-CDP-2-C-methyl-D-erythritol 2-phosphate = 2-C-methyl-D-erythritol 2,4-cyclic diphosphate + CMP. It participates in isoprenoid biosynthesis; isopentenyl diphosphate biosynthesis via DXP pathway; isopentenyl diphosphate from 1-deoxy-D-xylulose 5-phosphate: step 4/6. Functionally, involved in the biosynthesis of isopentenyl diphosphate (IPP) and dimethylallyl diphosphate (DMAPP), two major building blocks of isoprenoid compounds. Catalyzes the conversion of 4-diphosphocytidyl-2-C-methyl-D-erythritol 2-phosphate (CDP-ME2P) to 2-C-methyl-D-erythritol 2,4-cyclodiphosphate (ME-CPP) with a corresponding release of cytidine 5-monophosphate (CMP). The sequence is that of 2-C-methyl-D-erythritol 2,4-cyclodiphosphate synthase from Shewanella sp. (strain ANA-3).